A 658-amino-acid chain; its full sequence is Ubiquilin-3 (658 aa).

The Ubiquitin-like domain maps to 22–96 (IRVTVKTPKD…VHLVIKMQRR (75 aa)). One can recognise an STI1 domain in the interval 194–233 (NPHMQHLIQQNPEIGHILNNPEIMRQTMEFLRNPSMMQEM). Over residues 280 to 291 (TATTASTTTTSS) the composition is skewed to low complexity. Disordered stretches follow at residues 280–336 (TATT…RNRL) and 362–478 (YLQG…PESP). Residues 312 to 323 (VSGGRQGRGGRQ) show a composition bias toward gly residues. Composition is skewed to polar residues over residues 362 to 379 (YLQGTVPTSNPSQESPLS), 389 to 400 (SSPKSGSGQSLP), and 438 to 469 (TGPSTSLPNLTSQIGDSANRSSFVSTPSSLMS). Residues 614–658 (QLEAHFRVQLEQLRAMGFLNLEANLQALIATEGDVDAAVEKLRKS) form the UBA domain.

As to expression, testis-specific (at protein level).

The sequence is that of Ubiquilin-3 (Ubqln3) from Mus musculus (Mouse).